A 158-amino-acid chain; its full sequence is MVDKVPMTQNGFSKLQEELRWRQQEERPRIIEAIAEARAHGDLSENAEYHAAKEAQSHNEGRVSELEDLTARAEVIDLSKMSGSKIKFGATVKLIDEDTDEEKIYQIVGDQEADVKAGRISISSPIARAMIGKEAGDSIEVVAPGGSKAYEIIAVNWG.

The protein belongs to the GreA/GreB family.

Functionally, necessary for efficient RNA polymerase transcription elongation past template-encoded arresting sites. The arresting sites in DNA have the property of trapping a certain fraction of elongating RNA polymerases that pass through, resulting in locked ternary complexes. Cleavage of the nascent transcript by cleavage factors such as GreA or GreB allows the resumption of elongation from the new 3'terminus. GreA releases sequences of 2 to 3 nucleotides. This chain is Transcription elongation factor GreA, found in Allorhizobium ampelinum (strain ATCC BAA-846 / DSM 112012 / S4) (Agrobacterium vitis (strain S4)).